The primary structure comprises 271 residues: Ribosomal RNA small subunit methyltransferase A (271 aa).

Positions 18, 20, 45, 66, 91, and 112 each coordinate S-adenosyl-L-methionine.

The protein belongs to the class I-like SAM-binding methyltransferase superfamily. rRNA adenine N(6)-methyltransferase family. RsmA subfamily.

Its subcellular location is the cytoplasm. The catalysed reaction is adenosine(1518)/adenosine(1519) in 16S rRNA + 4 S-adenosyl-L-methionine = N(6)-dimethyladenosine(1518)/N(6)-dimethyladenosine(1519) in 16S rRNA + 4 S-adenosyl-L-homocysteine + 4 H(+). In terms of biological role, specifically dimethylates two adjacent adenosines (A1518 and A1519) in the loop of a conserved hairpin near the 3'-end of 16S rRNA in the 30S particle. May play a critical role in biogenesis of 30S subunits. In Vibrio cholerae serotype O1 (strain ATCC 39315 / El Tor Inaba N16961), this protein is Ribosomal RNA small subunit methyltransferase A.